We begin with the raw amino-acid sequence, 280 residues long: Polyamine aminopropyltransferase (280 aa).

A PABS domain is found at 3-237; that stretch reads DVYFMERDPY…YWWSFSVGSK (235 aa). Residue glutamine 33 coordinates S-methyl-5'-thioadenosine. Spermidine contacts are provided by histidine 64 and aspartate 88. Residues aspartate 108 and 139–140 contribute to the S-methyl-5'-thioadenosine site; that span reads DG. Aspartate 157 acts as the Proton acceptor in catalysis. Position 157-160 (157-160) interacts with spermidine; that stretch reads DSTD.

This sequence belongs to the spermidine/spermine synthase family. As to quaternary structure, homodimer or homotetramer.

The protein resides in the cytoplasm. The enzyme catalyses S-adenosyl 3-(methylsulfanyl)propylamine + putrescine = S-methyl-5'-thioadenosine + spermidine + H(+). The protein operates within amine and polyamine biosynthesis; spermidine biosynthesis; spermidine from putrescine: step 1/1. In terms of biological role, catalyzes the irreversible transfer of a propylamine group from the amino donor S-adenosylmethioninamine (decarboxy-AdoMet) to putrescine (1,4-diaminobutane) to yield spermidine. This chain is Polyamine aminopropyltransferase, found in Hydrogenobaculum sp. (strain Y04AAS1).